Here is a 658-residue protein sequence, read N- to C-terminus: DNA mismatch repair protein MutL (658 aa).

The span at 114–130 (RQEDSSHATQVKAEDGK) shows a compositional bias: basic and acidic residues. Disordered stretches follow at residues 114 to 138 (RQED…TAAA) and 355 to 405 (PSEN…HSLS).

Belongs to the DNA mismatch repair MutL/HexB family.

This protein is involved in the repair of mismatches in DNA. It is required for dam-dependent methyl-directed DNA mismatch repair. May act as a 'molecular matchmaker', a protein that promotes the formation of a stable complex between two or more DNA-binding proteins in an ATP-dependent manner without itself being part of a final effector complex. This Neisseria gonorrhoeae (strain ATCC 700825 / FA 1090) protein is DNA mismatch repair protein MutL.